A 198-amino-acid chain; its full sequence is Transmembrane protein 9B (198 aa).

The signal sequence occupies residues 1 to 33 (MATLWGGLLRLGSLLSLSCLALSVLLLAQLSDA). Asn-60 carries an N-linked (GlcNAc...) asparagine glycan. The helical transmembrane segment at 105-125 (IIIYLSILGLLLLYMVYLTLV) threads the bilayer. Phosphoserine is present on residues Ser-142 and Ser-189.

The protein belongs to the TMEM9 family. In terms of processing, N-glycosylated.

It localises to the lysosome membrane. The protein localises to the early endosome membrane. Enhances production of pro-inflammatory cytokines induced by TNF, IL1B, and TLR ligands. Has a role in TNF activation of both the NF-kappaB and MAPK pathways. The protein is Transmembrane protein 9B (TMEM9B) of Homo sapiens (Human).